We begin with the raw amino-acid sequence, 483 residues long: MKRWWFNSMLFKKEFEHRCRLSKSTSSLGPIENAIESKDPNINDTDKNIQSWGGHDNYSNVDLFFGVKDIRNFISDDTFLVKDSNGDIYSIYFDIENHIFEIDNDHSFCSELESSFYRNSSYLNNGSKSKNPQHDPYMNDTQYTWNNHINSCIDSYLQSQICIDSYIVSGSDNSSNNYISSSICCESGNSSKNADARTSDQIIRESSTDLDVTQKYRHLWVQCENCYGLNYKKFFKSKMNLCEQCGYHLKMSSSDRIELSIDPGTWEPMDEDMVSLDPIEFHSEEEPYKNRIDSYQRKTGLTEAVQTGIGQLDGINVAIAVMDFQFMGGSMGSVVGEKITRLIEYATKEFLPLIIVCASGGARMQEGSLSLMQMAKISSALYDYQSNKKLFYVPILTSPTTGGVTASFGMLGDIIIAEPNAYIAFAGKRVIEQTLNKTVPDGSQAAEYLFQKGLFDLIVPRNPLKSVLSELFQLHTFFPLNQN.

Positions 219–483 constitute a CoA carboxyltransferase N-terminal domain; the sequence is LWVQCENCYG…LHTFFPLNQN (265 aa). Residues cysteine 223, cysteine 226, cysteine 242, and cysteine 245 each coordinate Zn(2+). A C4-type zinc finger spans residues 223-245; the sequence is CENCYGLNYKKFFKSKMNLCEQC.

Belongs to the AccD/PCCB family. Acetyl-CoA carboxylase is a heterohexamer composed of biotin carboxyl carrier protein, biotin carboxylase and 2 subunits each of ACCase subunit alpha and ACCase plastid-coded subunit beta (accD). Zn(2+) is required as a cofactor.

It localises to the plastid. The protein localises to the chloroplast stroma. It carries out the reaction N(6)-carboxybiotinyl-L-lysyl-[protein] + acetyl-CoA = N(6)-biotinyl-L-lysyl-[protein] + malonyl-CoA. The protein operates within lipid metabolism; malonyl-CoA biosynthesis; malonyl-CoA from acetyl-CoA: step 1/1. Functionally, component of the acetyl coenzyme A carboxylase (ACC) complex. Biotin carboxylase (BC) catalyzes the carboxylation of biotin on its carrier protein (BCCP) and then the CO(2) group is transferred by the transcarboxylase to acetyl-CoA to form malonyl-CoA. In Guizotia abyssinica (Niger), this protein is Acetyl-coenzyme A carboxylase carboxyl transferase subunit beta, chloroplastic.